A 419-amino-acid chain; its full sequence is Cytosine permease (419 aa).

At 1-19 (MSQDNNFSQGPVPQSARKG) the chain is on the cytoplasmic side. Residues 20–39 (VLALTFVMLGLTFFSASMWT) form a helical membrane-spanning segment. At 40 to 51 (GGTLGTGLSYHD) the chain is on the periplasmic side. The chain crosses the membrane as a helical span at residues 52 to 71 (FFLAVLIGNLLLGIYTSFLG). The Cytoplasmic portion of the chain corresponds to 72–100 (YIGAKTGLTTHLLARFSFGVKGSWLPSLL). Residues 101-120 (LGGTQVGWFGVGVAMFAIPV) form a helical membrane-spanning segment. The Periplasmic portion of the chain corresponds to 121 to 127 (GKATGLD). Residues 128-147 (INLLIAVSGLLMTVTVFFGI) traverse the membrane as a helical segment. At 148-152 (SALTV) the chain is on the cytoplasmic side. Residues 153 to 172 (LSLIAVPAIACLGGYSVWLA) traverse the membrane as a helical segment. The Periplasmic segment spans residues 173–192 (VNGMGGLDALKAVVPAQPLD). The chain crosses the membrane as a helical span at residues 193-212 (FNVALALVVGSFISAGTLTA). The Cytoplasmic portion of the chain corresponds to 213–221 (DFVRFGRNA). Residues 222–242 (KLAVLVAMVAFFLGNSLMFIF) traverse the membrane as a helical segment. Topologically, residues 243 to 257 (GAAGAAALGMADISD) are periplasmic. A helical membrane pass occupies residues 258–277 (VMIAQGLLLPAIVVLGLNIW). The Cytoplasmic portion of the chain corresponds to 278-300 (TTNDNALYASGLGFANITGMSSK). A helical membrane pass occupies residues 301 to 320 (TLSVINGIIGTVCALWLYNN). A topological domain (periplasmic) is located at residue phenylalanine 321. A helical membrane pass occupies residues 322 to 341 (VGWLTFLSAAIPPVGGVIIA). Residues 342 to 358 (DYLMNRRRYEHFATTRM) lie on the Cytoplasmic side of the membrane. The chain crosses the membrane as a helical span at residues 359–378 (MSVNWVAILAVALGIAAGHW). Residues 379-380 (LP) are Periplasmic-facing. A helical transmembrane segment spans residues 381-400 (GIVPVNAVLGGALSYLILNP). At 401–419 (ILNRKTTAAMTHVEANSVE) the chain is on the cytoplasmic side.

Belongs to the purine-cytosine permease (2.A.39) family.

It localises to the cell inner membrane. Functionally, required for cytosine transport into the cell. This is Cytosine permease (codB) from Escherichia coli O157:H7.